Reading from the N-terminus, the 308-residue chain is MKVTPLAFESLGVRSQATLVETKDVRILIDPAVSLAPRRYGLPPHQLEVDKLTELAKKIYEISKDVDIIVITHYHYDHHDPGYVIPIEIYSNKMVFIKDPTNNINNSQKYRRAPKFLRALKDIPNKIEVADGKEFIFGSTKLIFSKAVPHGADERLGYVIQLGINDKDGTVLFTSDIEGAPKEQHLDFTKKISPNFIIIDGPLSYLLGRALSEEDLDKSIKNMESIVKNGLQYAIIDHHVLRDLNHENVLKPVKEVAKDFGVKVISAAEYLGVEPNLLEAHRRELFKKENKPARIPRGLAKLLHAGDN.

This sequence belongs to the UPF0282 family.

The chain is UPF0282 protein STK_23220 from Sulfurisphaera tokodaii (strain DSM 16993 / JCM 10545 / NBRC 100140 / 7) (Sulfolobus tokodaii).